We begin with the raw amino-acid sequence, 404 residues long: Argininosuccinate synthase (404 aa).

Residues 10–18 (AYSGGVDTS) and alanine 38 each bind ATP. Tyrosine 89 serves as a coordination point for L-citrulline. Position 119 (glycine 119) interacts with ATP. L-aspartate contacts are provided by threonine 121, asparagine 125, and aspartate 126. Asparagine 125 contributes to the L-citrulline binding site. The L-citrulline site is built by arginine 129, serine 177, serine 186, glutamate 262, and tyrosine 274.

It belongs to the argininosuccinate synthase family. Type 1 subfamily. In terms of assembly, homotetramer.

It localises to the cytoplasm. The catalysed reaction is L-citrulline + L-aspartate + ATP = 2-(N(omega)-L-arginino)succinate + AMP + diphosphate + H(+). It participates in amino-acid biosynthesis; L-arginine biosynthesis; L-arginine from L-ornithine and carbamoyl phosphate: step 2/3. This chain is Argininosuccinate synthase, found in Prochlorococcus marinus subsp. pastoris (strain CCMP1986 / NIES-2087 / MED4).